Consider the following 514-residue polypeptide: RNA polymerase I-specific transcription initiation factor RRN7 (514 aa).

An RRN7-type zinc finger spans residues 3–36; sequence TFIRGPICGTDNCPSRLWRIIDGRRTCQYGHVME. 4 residues coordinate Zn(2+): cysteine 10, cysteine 15, cysteine 29, and histidine 33. A B-reader region spans residues 37-66; it reads GDVEFNDDEDDLNGLGAGVITRRLNLTTNA. The interval 67–101 is B-linker; that stretch reads TGSFQSSQLTNSQLLQQQQRQSHKKFKKLIGHEAK. The interval 102-210 is N-terminal cyclin fold; the sequence is LLFLKSFQFI…KSWRIQLPNY (109 aa). The interval 211 to 320 is C-terminal cyclin fold; the sequence is YVSILEGSIS…MLTINWMLSF (110 aa).

This sequence belongs to the RRN7/TAF1B family. As to quaternary structure, component of the core factor (CF) complex, which consists of RRN6, RRN7 and RRN11. The CF heterotrimer may further dimerize to form a hexamer. RRN7 interacts with RRN6, RRN11, SPT15 and RRN9.

The protein resides in the nucleus. It localises to the nucleolus. Functionally, component of RNA polymerase I core factor complex (CF) that acts as a SUA7/TFIIB-like factor and plays a key role in multiple steps during transcription initiation such as pre-initiation complex (PIC) assembly and postpolymerase recruitment events in polymerase I (Pol I) transcription. Binds rDNA promoters and plays a role in Pol I recruitment. After binding of UAF (upstream activation factor) to an upstream element of the promoter, CF is recruited in a SPT15/TBP-dependent manner to form a pre-initiation complex. The protein is RNA polymerase I-specific transcription initiation factor RRN7 (RRN7) of Saccharomyces cerevisiae (strain ATCC 204508 / S288c) (Baker's yeast).